The chain runs to 226 residues: 7-cyano-7-deazaguanine synthase (226 aa).

ATP is bound at residue 7–17; sequence ISGGMDSLVTT. Cys187, Cys195, Cys198, and Cys201 together coordinate Zn(2+).

The protein belongs to the QueC family. It depends on Zn(2+) as a cofactor.

The enzyme catalyses 7-carboxy-7-deazaguanine + NH4(+) + ATP = 7-cyano-7-deazaguanine + ADP + phosphate + H2O + H(+). It participates in purine metabolism; 7-cyano-7-deazaguanine biosynthesis. In terms of biological role, catalyzes the ATP-dependent conversion of 7-carboxy-7-deazaguanine (CDG) to 7-cyano-7-deazaguanine (preQ(0)). In Chlorobium limicola (strain DSM 245 / NBRC 103803 / 6330), this protein is 7-cyano-7-deazaguanine synthase.